A 407-amino-acid polypeptide reads, in one-letter code: Na(+)-translocating NADH-quinone reductase subunit F (407 aa).

Residues 3–23 (IILGVVMFTLIVLVLSGLILA) traverse the membrane as a helical segment. A 2Fe-2S ferredoxin-type domain is found at 32–126 (GDVVIEINNE…NMKIELPEEI (95 aa)). 4 residues coordinate [2Fe-2S] cluster: Cys69, Cys75, Cys78, and Cys110. The region spanning 129–269 (VKKWECEVIS…SGPFGEFFAK (141 aa)) is the FAD-binding FR-type domain.

It belongs to the NqrF family. In terms of assembly, composed of six subunits; NqrA, NqrB, NqrC, NqrD, NqrE and NqrF. [2Fe-2S] cluster is required as a cofactor. Requires FAD as cofactor.

The protein resides in the cell inner membrane. The enzyme catalyses a ubiquinone + n Na(+)(in) + NADH + H(+) = a ubiquinol + n Na(+)(out) + NAD(+). Its function is as follows. NQR complex catalyzes the reduction of ubiquinone-1 to ubiquinol by two successive reactions, coupled with the transport of Na(+) ions from the cytoplasm to the periplasm. The first step is catalyzed by NqrF, which accepts electrons from NADH and reduces ubiquinone-1 to ubisemiquinone by a one-electron transfer pathway. This chain is Na(+)-translocating NADH-quinone reductase subunit F, found in Klebsiella pneumoniae subsp. pneumoniae (strain ATCC 700721 / MGH 78578).